A 508-amino-acid chain; its full sequence is Photosystem II CP47 reaction center protein (508 aa).

Helical transmembrane passes span 21 to 36 (AVHI…WAGS), 101 to 115 (IVFS…IWHW), 140 to 156 (GIHL…FGAF), 203 to 218 (IAAG…FHLS), 237 to 252 (VLSS…AFVV), and 457 to 472 (SFAL…HGAR).

The protein belongs to the PsbB/PsbC family. PsbB subfamily. As to quaternary structure, PSII is composed of 1 copy each of membrane proteins PsbA, PsbB, PsbC, PsbD, PsbE, PsbF, PsbH, PsbI, PsbJ, PsbK, PsbL, PsbM, PsbT, PsbX, PsbY, PsbZ, Psb30/Ycf12, at least 3 peripheral proteins of the oxygen-evolving complex and a large number of cofactors. It forms dimeric complexes. Requires Binds multiple chlorophylls. PSII binds additional chlorophylls, carotenoids and specific lipids. as cofactor.

The protein localises to the plastid. Its subcellular location is the chloroplast thylakoid membrane. Functionally, one of the components of the core complex of photosystem II (PSII). It binds chlorophyll and helps catalyze the primary light-induced photochemical processes of PSII. PSII is a light-driven water:plastoquinone oxidoreductase, using light energy to abstract electrons from H(2)O, generating O(2) and a proton gradient subsequently used for ATP formation. This is Photosystem II CP47 reaction center protein from Nandina domestica (Heavenly bamboo).